A 262-amino-acid polypeptide reads, in one-letter code: Ribosomal RNA small subunit methyltransferase A (262 aa).

S-adenosyl-L-methionine-binding residues include Asn-14, Leu-16, Gly-41, Glu-63, Asp-85, and Asn-105.

It belongs to the class I-like SAM-binding methyltransferase superfamily. rRNA adenine N(6)-methyltransferase family. RsmA subfamily.

The protein localises to the cytoplasm. It catalyses the reaction adenosine(1518)/adenosine(1519) in 16S rRNA + 4 S-adenosyl-L-methionine = N(6)-dimethyladenosine(1518)/N(6)-dimethyladenosine(1519) in 16S rRNA + 4 S-adenosyl-L-homocysteine + 4 H(+). Functionally, specifically dimethylates two adjacent adenosines (A1518 and A1519) in the loop of a conserved hairpin near the 3'-end of 16S rRNA in the 30S particle. May play a critical role in biogenesis of 30S subunits. This is Ribosomal RNA small subunit methyltransferase A from Maridesulfovibrio salexigens (strain ATCC 14822 / DSM 2638 / NCIMB 8403 / VKM B-1763) (Desulfovibrio salexigens).